The chain runs to 624 residues: Sodium/potassium/calcium exchanger 3 (624 aa).

A signal peptide spans 1–25 (RDLLLSQLCFLASVALLLWSLSSLR). Residues 26 to 88 (EQKELDLMDL…DIFSNEDRRQ (63 aa)) are Extracellular-facing. N52 and N67 each carry an N-linked (GlcNAc...) asparagine glycan. The helical transmembrane segment at 89 to 109 (GAVVLHVLCAMYMFYALAIVC) threads the bilayer. Over 110 to 133 (DDFFVPSLEKICERLHLSEDVAGA) the chain is Cytoplasmic. The Alpha-1 repeat unit spans residues 130–170 (VAGATFMAAGSSAPELFTSVIGVFITKGDVGVGTIVGSAVF). The chain crosses the membrane as a helical span at residues 134–154 (TFMAAGSSAPELFTSVIGVFI). The Extracellular segment spans residues 155–163 (TKGDVGVGT). The helical transmembrane segment at 164–184 (IVGSAVFNILCIIGVCGLFAG) threads the bilayer. Over 185-191 (QVVALSS) the chain is Cytoplasmic. A helical membrane pass occupies residues 192 to 212 (WCLLRDSIYYTLSVVALIVFI). At 213–215 (YDE) the chain is on the extracellular side. Residues 216–236 (KVSWWESLVLVLMYLIYIIIM) form a helical membrane-spanning segment. Residues 237-465 (KYNACIHQCF…WFMVTFASST (229 aa)) lie on the Cytoplasmic side of the membrane. Residue S289 is modified to Phosphoserine. The segment covering 386–414 (AEADNETENENEDENNENDEEEDEDDDEG) has biased composition (acidic residues). Residues 386-421 (AEADNETENENEDENNENDEEEDEDDDEGPYTPFDP) form a disordered region. A helical transmembrane segment spans residues 466–486 (LWIAAFSYMMVWMVTIIGYTL). Residues 487–491 (GIPDV) are Extracellular-facing. The chain crosses the membrane as a helical span at residues 492-512 (IMGITFLAAGTSVPDCMASLI). The stretch at 499 to 530 (AAGTSVPDCMASLIVARQGMGDMAVSNSIGSN) is one Alpha-2 repeat. The Cytoplasmic segment spans residues 513–530 (VARQGMGDMAVSNSIGSN). A helical membrane pass occupies residues 531-551 (VFDILIGLGLPWALQTLAVDY). At 552 to 561 (GSYIRLNSRG) the chain is on the extracellular side. Residues 562 to 582 (LIYSVGLLLASVFVTVFGVHL) traverse the membrane as a helical segment. Residues 583–596 (NKWQLDKKLGCGCL) are Cytoplasmic-facing. The chain crosses the membrane as a helical span at residues 597–617 (FLYGVFLCFSIMTEFNVFTFV). Residues 618 to 624 (NLPMCGD) are Extracellular-facing.

Belongs to the Ca(2+):cation antiporter (CaCA) (TC 2.A.19) family. SLC24A subfamily. As to expression, abundant in the brain. Expressed at low levels in the aorta, uterus and intestine.

Its subcellular location is the cell membrane. The enzyme catalyses Ca(2+)(out) + K(+)(out) + 4 Na(+)(in) = Ca(2+)(in) + K(+)(in) + 4 Na(+)(out). Functionally, calcium, potassium:sodium antiporter that transports 1 Ca(2+) and 1 K(+) in exchange for 4 Na(+). This chain is Sodium/potassium/calcium exchanger 3 (Slc24a3), found in Rattus norvegicus (Rat).